A 106-amino-acid chain; its full sequence is Large ribosomal subunit protein eL42 (106 aa).

This sequence belongs to the eukaryotic ribosomal protein eL42 family.

In Debaryomyces hansenii (strain ATCC 36239 / CBS 767 / BCRC 21394 / JCM 1990 / NBRC 0083 / IGC 2968) (Yeast), this protein is Large ribosomal subunit protein eL42 (RPL44).